The primary structure comprises 422 residues: MTVQDYMLTLGKQARAASRQMASADTGKKNAALLAIADAINSARDTIAAENARDMEAGRANGLDAALLDRLELTPERIDGMIEGLNQVAALPDPCGEITDLKYRPSGIQLGKKRTPLGVVGIIYESRPNVTVDAASLCLKSGNAAILRGGSEAIHSNKAVAVCIAAGLKAAGLPETAVQVVETTDRAAVGELITMTKYVDVVVPRGGKSLIERISADARVSVIKHLDGICHVYVDKTANLDKAFNIVINSKTHRYGVCNAMETMLVDEAIAADFLPRAAKEFAARGVELRGCEKTVALLTASDIPVVAALEEDWDTEYLAPILSIKLVANMDEAIEHINNHGSHHTDALVSENYTLARKFLTEVDSSSVMINASTRFADGFEYGLGAEIGISTDKIHARGPVGLEGLTSQKWIVFGDGHIRN.

The protein belongs to the gamma-glutamyl phosphate reductase family.

It is found in the cytoplasm. It catalyses the reaction L-glutamate 5-semialdehyde + phosphate + NADP(+) = L-glutamyl 5-phosphate + NADPH + H(+). The protein operates within amino-acid biosynthesis; L-proline biosynthesis; L-glutamate 5-semialdehyde from L-glutamate: step 2/2. Catalyzes the NADPH-dependent reduction of L-glutamate 5-phosphate into L-glutamate 5-semialdehyde and phosphate. The product spontaneously undergoes cyclization to form 1-pyrroline-5-carboxylate. The sequence is that of Gamma-glutamyl phosphate reductase from Saccharophagus degradans (strain 2-40 / ATCC 43961 / DSM 17024).